Here is a 75-residue protein sequence, read N- to C-terminus: OcyC3 (75 aa).

The N-terminal stretch at 1-22 (MQYKTFLVISLAYLLVADEAAA) is a signal peptide. Positions 51-75 (EINNVFEPYHENLDLELERFLSQLQ) are excised as a propeptide.

As to expression, expressed by the venom gland.

The protein localises to the secreted. It localises to the target cell membrane. Functionally, amphipathic peptide with probable antimicrobial activity. May act by disrupting the integrity of the bacterial cell membrane. This is OcyC3 from Opisthacanthus cayaporum (South American scorpion).